The primary structure comprises 329 residues: CDP-6-deoxy-L-threo-D-glycero-4-hexulose-3-dehydrase reductase (329 aa).

The 2Fe-2S ferredoxin-type domain occupies 2-93 (SLNVKLHPSG…ELDVNYYPEL (92 aa)). Cys-37, Cys-42, Cys-45, and Cys-75 together coordinate [2Fe-2S] cluster. The FAD-binding FR-type domain occupies 98–197 (KKTYPCKLDS…EGPQGTFFVR (100 aa)).

Monomer.

The protein operates within nucleotide-sugar biosynthesis; CDP-ascarylose biosynthesis. It functions in the pathway bacterial outer membrane biogenesis; lipopolysaccharide biosynthesis. Participates in the conversion of CDP-6-deoxy-D-glycero-L-threo-4-hexulose to 3,6-dideoxy-D-glycero-D-glycero-4-hexulose together with CDP-6-deoxy-D-glycero-L-threo-4-hexulose-3-dehydrase (E1) in two consecutive steps. The detailed mechanism of E3 is not yet resolved. The polypeptide is CDP-6-deoxy-L-threo-D-glycero-4-hexulose-3-dehydrase reductase (ascD) (Yersinia pestis).